Reading from the N-terminus, the 101-residue chain is Protein S100-A4 (101 aa).

Lys7 is modified (N6-acetyllysine). EF-hand domains lie at 12–47 (MVST…SFLG) and 50–85 (TDEA…VAMM). The Ca(2+) site is built by Lys28 and Glu33. Lys35 is subject to N6-acetyllysine. Positions 63, 65, 67, 69, and 74 each coordinate Ca(2+).

It belongs to the S-100 family. Homodimer. Interacts with PPFIBP1 in a calcium-dependent mode. Interacts with PGLYRP1; this complex acts as a chemoattractant that promotes lymphocyte movement. Interacts with MYH9; this interaction increases cell motility. Interacts with Annexin 2/ANXA2. Interacts with TP53; this interaction promotes TP53 degradation. Interacts with CCR5 and CXCR3. Interacts with FCGR3A; this interaction inhibits PKC-dependent phosphorylation of FCGR3A.

It is found in the secreted. It localises to the nucleus. The protein resides in the cytoplasm. Calcium-binding protein that plays a role in various cellular processes including motility, angiogenesis, cell differentiation, apoptosis, and autophagy. Increases cell motility and invasiveness by interacting with non-muscle myosin heavy chain (NMMHC) IIA/MYH9. Mechanistically, promotes filament depolymerization and increases the amount of soluble myosin-IIA, resulting in the formation of stable protrusions facilitating chemotaxis. Also modulates the pro-apoptotic function of TP53 by binding to its C-terminal transactivation domain within the nucleus and reducing its protein levels. Within the extracellular space, stimulates cytokine production including granulocyte colony-stimulating factor and CCL24 from T-lymphocytes. In addition, stimulates T-lymphocyte chemotaxis by acting as a chemoattractant complex with PGLYRP1 that promotes lymphocyte migration via CCR5 and CXCR3 receptors. This is Protein S100-A4 (S100A4) from Canis lupus familiaris (Dog).